We begin with the raw amino-acid sequence, 225 residues long: Ribonuclease 3 (225 aa).

Residues 5–127 (IDKLERKLGY…IIGAIYLDSD (123 aa)) enclose the RNase III domain. Glu40 provides a ligand contact to Mg(2+). Asp44 is a catalytic residue. Mg(2+) contacts are provided by Asp113 and Glu116. The active site involves Glu116. The region spanning 154–224 (DPKTRLQEFL…AETALEQLTN (71 aa)) is the DRBM domain. Positions 204 to 225 (GTSRRKAEQAAAETALEQLTNG) are disordered. Over residues 212-225 (QAAAETALEQLTNG) the composition is skewed to low complexity.

Belongs to the ribonuclease III family. In terms of assembly, homodimer. Requires Mg(2+) as cofactor.

Its subcellular location is the cytoplasm. It catalyses the reaction Endonucleolytic cleavage to 5'-phosphomonoester.. In terms of biological role, digests double-stranded RNA. Involved in the processing of primary rRNA transcript to yield the immediate precursors to the large and small rRNAs (23S and 16S). Processes some mRNAs, and tRNAs when they are encoded in the rRNA operon. Processes pre-crRNA and tracrRNA of type II CRISPR loci if present in the organism. This Vibrio parahaemolyticus serotype O3:K6 (strain RIMD 2210633) protein is Ribonuclease 3.